We begin with the raw amino-acid sequence, 316 residues long: uncharacterized protein (316 aa).

One can recognise an S4 RNA-binding domain in the interval 26–98 (ERIDRFLAGA…IPLDVVYEDA (73 aa)). Asp-148 is an active-site residue.

This sequence belongs to the pseudouridine synthase RluA family.

It catalyses the reaction a uridine in RNA = a pseudouridine in RNA. This is an uncharacterized protein from Chloroflexus aurantiacus (strain ATCC 29366 / DSM 635 / J-10-fl).